The primary structure comprises 407 residues: Methylenetetrahydrofolate--tRNA-(uracil-5-)-methyltransferase TrmFO (407 aa).

9 to 14 (GAGLAG) is an FAD binding site.

The protein belongs to the MnmG family. TrmFO subfamily. FAD is required as a cofactor.

It is found in the cytoplasm. It catalyses the reaction uridine(54) in tRNA + (6R)-5,10-methylene-5,6,7,8-tetrahydrofolate + NADH + H(+) = 5-methyluridine(54) in tRNA + (6S)-5,6,7,8-tetrahydrofolate + NAD(+). The catalysed reaction is uridine(54) in tRNA + (6R)-5,10-methylene-5,6,7,8-tetrahydrofolate + NADPH + H(+) = 5-methyluridine(54) in tRNA + (6S)-5,6,7,8-tetrahydrofolate + NADP(+). In terms of biological role, catalyzes the folate-dependent formation of 5-methyl-uridine at position 54 (M-5-U54) in all tRNAs. The chain is Methylenetetrahydrofolate--tRNA-(uracil-5-)-methyltransferase TrmFO from Lactobacillus helveticus (strain DPC 4571).